The following is a 268-amino-acid chain: Probable ribosomal RNA small subunit methyltransferase A (268 aa).

6 residues coordinate S-adenosyl-L-methionine: His23, Leu25, Gly50, Glu71, Asp95, and Asn110.

It belongs to the class I-like SAM-binding methyltransferase superfamily. rRNA adenine N(6)-methyltransferase family. RsmA subfamily.

Its subcellular location is the cytoplasm. In terms of biological role, specifically dimethylates two adjacent adenosines in the loop of a conserved hairpin near the 3'-end of 16S rRNA in the 30S particle. May play a critical role in biogenesis of 30S subunits. This chain is Probable ribosomal RNA small subunit methyltransferase A, found in Pyrococcus horikoshii (strain ATCC 700860 / DSM 12428 / JCM 9974 / NBRC 100139 / OT-3).